The primary structure comprises 174 residues: Large ribosomal subunit protein uL10 (174 aa).

Belongs to the universal ribosomal protein uL10 family. Part of the ribosomal stalk of the 50S ribosomal subunit. The N-terminus interacts with L11 and the large rRNA to form the base of the stalk. The C-terminus forms an elongated spine to which L12 dimers bind in a sequential fashion forming a multimeric L10(L12)X complex.

In terms of biological role, forms part of the ribosomal stalk, playing a central role in the interaction of the ribosome with GTP-bound translation factors. This chain is Large ribosomal subunit protein uL10, found in Synechococcus sp. (strain RCC307).